A 728-amino-acid polypeptide reads, in one-letter code: Catalase-peroxidase (728 aa).

The tryptophyl-tyrosyl-methioninium (Trp-Tyr) (with M-244) cross-link spans 91-218 (WHSAGTYRIA…LAAVQMGLIY (128 aa)). The active-site Proton acceptor is His92. The segment at residues 218 to 244 (YVNPEGPDGNPDPVAAARDIRETFARM) is a cross-link (tryptophyl-tyrosyl-methioninium (Tyr-Met) (with W-91)). His259 contributes to the heme b binding site.

The protein belongs to the peroxidase family. Peroxidase/catalase subfamily. Homodimer or homotetramer. Requires heme b as cofactor. In terms of processing, formation of the three residue Trp-Tyr-Met cross-link is important for the catalase, but not the peroxidase activity of the enzyme.

It catalyses the reaction H2O2 + AH2 = A + 2 H2O. The enzyme catalyses 2 H2O2 = O2 + 2 H2O. Its function is as follows. Bifunctional enzyme with both catalase and broad-spectrum peroxidase activity. The protein is Catalase-peroxidase of Burkholderia multivorans (strain ATCC 17616 / 249).